The chain runs to 360 residues: DNA replication and repair protein RecF (360 aa).

33 to 40 contributes to the ATP binding site; that stretch reads GENGSGKT.

The protein belongs to the RecF family.

The protein resides in the cytoplasm. The RecF protein is involved in DNA metabolism; it is required for DNA replication and normal SOS inducibility. RecF binds preferentially to single-stranded, linear DNA. It also seems to bind ATP. The protein is DNA replication and repair protein RecF of Rickettsia canadensis (strain McKiel).